Consider the following 236-residue polypeptide: MQVQDDGVNLIPFAKCSRVVSRSPPPRLPSQSLRPMPQRYGDVFWKNLNQRPTPTWLEEQHIPPMLRATGCSQLGLYPPEQLPPPEMLWRRKKRRPCLEGMQQQGLGGVPARVRAVTYHLEDLRRRQSIINELKKAQWGSSGAASEPVVLGEEGCGFPSTNEYPDLEEERATYPQEEDRFLTPGRAQLLWSPWSPLDQEEACASRQLHSLASFSTVTARRNPLHNPWGMELAASEE.

Serine 23 carries the phosphoserine modification. Residues 75 to 99 are interaction with CCNA1 and CCNA1/CDK2 complex; essential for CDK2 inhibitory activity; sequence GLYPPEQLPPPEMLWRRKKRRPCLE. The short motif at 90-95 is the Nuclear localization signal element; sequence RRKKRR. Phosphothreonine is present on threonine 182. Phosphoserine occurs at positions 191 and 194.

It belongs to the INCA family. Interacts with CCNA1. Interacts with CCNA2, CCNB1 and CCNE1. Found in a complex with CCNA1 and CDK2. Interacts with ZNF16; the interaction inhibits INCA1 activity and induces the cell cycle process. Interacts with SPACA9. Interacts with the CCNA1/CDK2 complex. Interacts with ING5, DAZAP2, RNF26, USP15, SPOUT1, DPH7, TRIM26 and RAB5C. Post-translationally, phosphorylated when part of a complex with CCNA1 and CDK2. Strongly phosphorylated by CDK2 on its C-terminal region spanning amino acid 149-221. Less intensively phosphorylated by CDK2 on its first 75 amino acid residues. As to expression, detected in testis, and at lower levels in ovary. Detected at very low levels in testis tumors. Down-regulated in bone marrow cells in acute myeloid and lymphoid leukemia patients as compared with normal bone marrow cells.

The protein localises to the nucleus. The protein resides in the cytoplasm. Binds to CDK2-bound cyclins and inhibits the kinase activity of CDK2; binding to cyclins is critical for its function as CDK inhibitor. Inhibits cell growth and cell proliferation and may play a role in cell cycle control. Required for ING5-mediated regulation of S-phase progression, enhancement of Fas-induced apoptosis and inhibition of cell growth. The protein is Protein INCA1 (INCA1) of Homo sapiens (Human).